The sequence spans 1244 residues: Alpha-protein kinase 1 (1244 aa).

ADP-D-glycero-beta-D-manno-heptose-binding positions include Phe-61, Gln-67, Arg-116, 150–153 (RQAR), Asp-231, Lys-233, 236–237 (ST), and Phe-295. 4 disordered regions span residues 650 to 675 (LQEPNNDNLEPSQNQPQQQMPLTPFS), 701 to 737 (VRNMGPRNTSAHSRPSYRSASWSSDSGRPKNMGTHPS), 757 to 798 (VKDR…TEDA), and 824 to 848 (NWPVQNPDSRKSGGPVAEQGIDPDA). Over residues 652–675 (EPNNDNLEPSQNQPQQQMPLTPFS) the composition is skewed to polar residues. Low complexity predominate over residues 713-726 (SRPSYRSASWSSDS). The span at 757–771 (VKDRQGKEQGEEISE) shows a compositional bias: basic and acidic residues. Over residues 787-798 (PEGETAESTEDA) the composition is skewed to acidic residues. One can recognise an Alpha-type protein kinase domain in the interval 1017–1237 (KYSKKSELWT…ICHRLSLTRP (221 aa)).

The protein belongs to the protein kinase superfamily. Alpha-type protein kinase family. ALPK subfamily. Highly expressed in liver. Expressed in the optic nerve and retinal pigmented epithelium. Lower expression is observed in the macula and extramacular retina.

It localises to the cytoplasm. The protein resides in the cytosol. The protein localises to the cytoskeleton. Its subcellular location is the spindle pole. It is found in the microtubule organizing center. It localises to the centrosome. The protein resides in the cell projection. The protein localises to the cilium. The enzyme catalyses L-seryl-[protein] + ATP = O-phospho-L-seryl-[protein] + ADP + H(+). The catalysed reaction is L-threonyl-[protein] + ATP = O-phospho-L-threonyl-[protein] + ADP + H(+). Its activity is regulated as follows. Serine/threonine-protein kinase activity is stimulated upon ADP-D-glycero-beta-D-manno-heptose (ADP-Heptose)-binding. Serine/threonine-protein kinase that detects bacterial pathogen-associated molecular pattern metabolites (PAMPs) and initiates an innate immune response, a critical step for pathogen elimination and engagement of adaptive immunity. Specifically recognizes and binds ADP-D-glycero-beta-D-manno-heptose (ADP-Heptose), a potent PAMP present in all Gram-negative and some Gram-positive bacteria. ADP-Heptose-binding stimulates its kinase activity to phosphorylate and activate TIFA, triggering pro-inflammatory NF-kappa-B signaling. May be involved in monosodium urate monohydrate (MSU)-induced inflammation by mediating phosphorylation of unconventional myosin MYO9A. May also play a role in apical protein transport by mediating phosphorylation of unconventional myosin MYO1A. May play a role in ciliogenesis. This chain is Alpha-protein kinase 1, found in Homo sapiens (Human).